A 36-amino-acid polypeptide reads, in one-letter code: Kappa-theraphotoxin-Aa1a (36 aa).

Cystine bridges form between cysteine 3-cysteine 18, cysteine 10-cysteine 23, and cysteine 17-cysteine 30. At isoleucine 36 the chain carries Isoleucine amide.

The protein belongs to the neurotoxin 10 (Hwtx-1) family. In terms of tissue distribution, expressed by the venom gland.

Its subcellular location is the secreted. Its function is as follows. Selective inhibitor of voltage-gated potassium channel Kv10.1/KCNH1/EAG1 (IC(50)=637 nM). It acts by shifting the voltage dependence of channel activation in a depolarising direction. It shows a 100% inhibition at saturating concentrations, shows fast on-rates and is reversible. It also slightly affects channel inactivation, when the membrane is highly depolarised (&gt;+80 mV). In Avicularia aurantiaca (Yellow-banded pinktoe tarantula), this protein is Kappa-theraphotoxin-Aa1a.